Here is a 146-residue protein sequence, read N- to C-terminus: Hemoglobin subunit beta/beta' (146 aa).

In terms of domain architecture, Globin spans 2-146 (HWSAEEKQLI…VAHALARKYH (145 aa)). Positions 63 and 92 each coordinate heme b.

This sequence belongs to the globin family. As to quaternary structure, heterotetramer of two alpha chains and two beta chains. As to expression, red blood cells.

Functionally, involved in oxygen transport from the lung to the various peripheral tissues. The chain is Hemoglobin subunit beta/beta' (HBB) from Chroicocephalus ridibundus (Black-headed gull).